Consider the following 62-residue polypeptide: Protein DsrB (62 aa).

The protein belongs to the DsrB family.

This chain is Protein DsrB, found in Citrobacter koseri (strain ATCC BAA-895 / CDC 4225-83 / SGSC4696).